The following is a 147-amino-acid chain: 3-hydroxyacyl-[acyl-carrier-protein] dehydratase FabZ (147 aa).

The active site involves His-49.

This sequence belongs to the thioester dehydratase family. FabZ subfamily.

The protein resides in the cytoplasm. It catalyses the reaction a (3R)-hydroxyacyl-[ACP] = a (2E)-enoyl-[ACP] + H2O. Functionally, involved in unsaturated fatty acids biosynthesis. Catalyzes the dehydration of short chain beta-hydroxyacyl-ACPs and long chain saturated and unsaturated beta-hydroxyacyl-ACPs. This Syntrophotalea carbinolica (strain DSM 2380 / NBRC 103641 / GraBd1) (Pelobacter carbinolicus) protein is 3-hydroxyacyl-[acyl-carrier-protein] dehydratase FabZ.